A 353-amino-acid chain; its full sequence is DNA-directed RNA polymerase subunit alpha (353 aa).

Residues 1 to 226 are alpha N-terminal domain (alpha-NTD); that stretch reads MLISQRPTLT…ELFGLARELN (226 aa). The alpha C-terminal domain (alpha-CTD) stretch occupies residues 241–353; sequence ADHIASFGLP…TEDYAETEQL (113 aa). The tract at residues 326-353 is disordered; it reads ATGTWSDTDAGSFGDAEGTEDYAETEQL. Positions 342–353 are enriched in acidic residues; sequence EGTEDYAETEQL.

The protein belongs to the RNA polymerase alpha chain family. As to quaternary structure, homodimer. The RNAP catalytic core consists of 2 alpha, 1 beta, 1 beta' and 1 omega subunit. When a sigma factor is associated with the core the holoenzyme is formed, which can initiate transcription.

It carries out the reaction RNA(n) + a ribonucleoside 5'-triphosphate = RNA(n+1) + diphosphate. In terms of biological role, DNA-dependent RNA polymerase catalyzes the transcription of DNA into RNA using the four ribonucleoside triphosphates as substrates. In Rhodococcus jostii (strain RHA1), this protein is DNA-directed RNA polymerase subunit alpha.